The sequence spans 616 residues: MRFAKALAITAVLLSGVVEATSDAVIEEALKAPTINPLPGPVTWYLHADEGRKYLAPFVSYHGPHKSGIRDAWERCYSTIRRLKWYPQALEGPIPKFDPFPDQSSKPKEKRQNAPPGAMIRRVRVKVKDVDAKLAHKVDESYSLTVSAKSEAIEIEAQTPWGARHAFTTLQQIVVYDEKSQRFYIERPFTISEGPLYPIRGILLDSGRNFISPSKIKEQLDAMALSKLNVLHWHITDTQSWPLQVNTYPQMTEDAYSKRMVYSHATIKEIIEYARQRGIRVIPEIDTPSHSSSGWKRIDPDLVACGNSWWSNDFFPHHTALEPNPGQLDIAYNKTYEVLENLYKEVSSLFEDEFHHLGGDELQPNCYKFSKHVTKWLAEHPDMTLNDLLQEYVDRTLPALDKIKHRRFIYWEDMLLSEQIHAERIPRNVVLQTWNGGLDNIKKLTSNGYDVIVSSADFFYLDCGNGGWVSNDPRYNVMRNPTPGTPNFNYGGDGGSWCAPYKTWQRIYDYDFASELTGPEKEHILGGIAPLWSEQIDDANITPKFWPRAAALAELLWSGNRDKEGKKRTYLMTARINNFREYLTANGIGAAPLQPRYCLKHPHHCDLYSDPNAVLG.

The N-terminal stretch at 1–20 (MRFAKALAITAVLLSGVVEA) is a signal peptide. The tract at residues 96–117 (KFDPFPDQSSKPKEKRQNAPPG) is disordered. N-linked (GlcNAc...) asparagine glycosylation is present at N333. The active-site Proton donor is E361.

Belongs to the glycosyl hydrolase 20 family.

Its subcellular location is the secreted. The catalysed reaction is Hydrolysis of terminal non-reducing N-acetyl-D-hexosamine residues in N-acetyl-beta-D-hexosaminides.. Its function is as follows. Beta-hexosaminidase that shows a broad substrate specificity. The polypeptide is Probable beta-hexosaminidase ARB_01353 (Arthroderma benhamiae (strain ATCC MYA-4681 / CBS 112371) (Trichophyton mentagrophytes)).